A 234-amino-acid chain; its full sequence is Immune-associated nucleotide-binding protein 2 (234 aa).

An AIG1-type G domain is found at 21–223 (KPVKNIVLVG…YTEDMYRNIK (203 aa)). GTP-binding positions include 30–38 (GRSVNGICT), Ser-51, and Asn-183.

This sequence belongs to the TRAFAC class TrmE-Era-EngA-EngB-Septin-like GTPase superfamily. AIG1/Toc34/Toc159-like paraseptin GTPase family. IAN subfamily. Mostly expressed in pollen. Also detected in lateral roots and radicles.

This is Immune-associated nucleotide-binding protein 2 from Arabidopsis thaliana (Mouse-ear cress).